The primary structure comprises 276 residues: MASETENLRAIALDPSHPTPTDVGEIYDETSDSLTDMLGGYIHVGYWEDPSKQETAEVVGDRLTREVGVRLSPAQGEHILDVGCGTGKSTAQLAGIYDAQVTGITISKQQVEVARSQYGRKMPAGQVHFQFADAMDLPFGDASFDGAYAIESLVHMLDKRTALAQIAQVLRPGSRLVIADLVSDHPCPDSPVLARYAEIFEPPLVSADDLQNLLRQAGFKVIDVTDIRENIRPSCKLFETKGLSLGGELGQKLLEIASILEEMNELGYALITAERL.

S-adenosyl-L-methionine is bound by residues glutamine 110, 133-134 (DA), and histidine 155.

Belongs to the methyltransferase superfamily. Requires S-adenosyl-L-methionine as cofactor.

It functions in the pathway alkaloid biosynthesis. In terms of biological role, O-methyltransferase; part of the gene cluster that mediates the biosynthesis of communesins, a prominent class of indole alkaloids with great potential as pharmaceuticals. Communesins are biosynthesized by the coupling of tryptamine and aurantioclavine, two building blocks derived from L-tryptophan. The L-tryptophan decarboxylase cnsB converts L-tryptophan to tryptamine, whereas the tryptophan dimethylallyltransferase cnsF converts L-tryptophan to 4-dimethylallyl tryptophan which is further transformed to aurantioclavine by the aurantioclavine synthase cnsA, probably aided by the catalase cnsD. The cytochrome P450 monooxygenase cnsC catalyzes the heterodimeric coupling between the two different indole moieties, tryptamine and aurantioclavine, to construct vicinal quaternary stereocenters and yield the heptacyclic communesin scaffold. The O-methyltransferase cnsE then methylates the communesin scaffold to produce communesin K, the simplest characterized communesin that contains the heptacyclic core. The dioxygenase cnsJ converts communesin K into communesin I. Acylation to introduce the hexadienyl group at position N16 of communesin I by the acyltransferase cnsK leads to the production of communesin B. The hexadienyl group is produced by the highly reducing polyketide synthase cnsI, before being hydrolytically removed from cnsI by the serine hydrolase cnsH, converted into hexadienyl-CoA by the CoA ligase cnsG, and then transferred to communesin I by cnsK. Surprisingly, cnsK may also be a promiscuous acyltransferase that can tolerate a range of acyl groups, including acetyl-, propionyl-, and butyryl-CoA, which lead to communesins A, G and H respectively. The roles of the alpha-ketoglutarate-dependent dioxygenases cnsM and cnsP have still to be determined. The protein is O-methyltransferase cnsE of Penicillium expansum (Blue mold rot fungus).